The chain runs to 393 residues: S-adenosylmethionine synthase 2 (393 aa).

Glutamate 9 contributes to the Mg(2+) binding site. Histidine 15 provides a ligand contact to ATP. Glutamate 43 serves as a coordination point for K(+). Residues glutamate 56 and glutamine 99 each contribute to the L-methionine site. ATP is bound by residues 167 to 169 (DGK), 235 to 238 (SGRF), aspartate 246, 252 to 253 (RK), alanine 269, lysine 273, and lysine 277. Aspartate 246 is an L-methionine binding site. An L-methionine-binding site is contributed by lysine 277.

The protein belongs to the AdoMet synthase family. In terms of assembly, homotetramer. Interacts with GRF3. Mn(2+) is required as a cofactor. It depends on Mg(2+) as a cofactor. Co(2+) serves as cofactor. Requires K(+) as cofactor. In terms of tissue distribution, highly expressed in stems and roots. Detected in trichomes (at the protein level).

The protein resides in the cytoplasm. The enzyme catalyses L-methionine + ATP + H2O = S-adenosyl-L-methionine + phosphate + diphosphate. It functions in the pathway amino-acid biosynthesis; S-adenosyl-L-methionine biosynthesis; S-adenosyl-L-methionine from L-methionine: step 1/1. Its activity is regulated as follows. Inhibited by 5,5'-dithiobis-2-nitrobenzoic acid (DTNB) and N-ethylmaleimide (NEM) (in vitro). In terms of biological role, catalyzes the formation of S-adenosylmethionine from methionine and ATP. The reaction comprises two steps that are both catalyzed by the same enzyme: formation of S-adenosylmethionine (AdoMet) and triphosphate, and subsequent hydrolysis of the triphosphate. The protein is S-adenosylmethionine synthase 2 (SAM2) of Arabidopsis thaliana (Mouse-ear cress).